Here is a 309-residue protein sequence, read N- to C-terminus: tRNA dimethylallyltransferase (309 aa).

15 to 22 (GPTASGKS) is an ATP binding site. Substrate is bound at residue 17–22 (TASGKS). Residues 40–43 (DSRQ) form an interaction with substrate tRNA region.

It belongs to the IPP transferase family. Monomer. Requires Mg(2+) as cofactor.

It catalyses the reaction adenosine(37) in tRNA + dimethylallyl diphosphate = N(6)-dimethylallyladenosine(37) in tRNA + diphosphate. In terms of biological role, catalyzes the transfer of a dimethylallyl group onto the adenine at position 37 in tRNAs that read codons beginning with uridine, leading to the formation of N6-(dimethylallyl)adenosine (i(6)A). The sequence is that of tRNA dimethylallyltransferase from Chlorobium phaeovibrioides (strain DSM 265 / 1930) (Prosthecochloris vibrioformis (strain DSM 265)).